The following is a 95-amino-acid chain: Small ribosomal subunit protein bS18 (95 aa).

Belongs to the bacterial ribosomal protein bS18 family. In terms of assembly, part of the 30S ribosomal subunit. Forms a tight heterodimer with protein bS6.

In terms of biological role, binds as a heterodimer with protein bS6 to the central domain of the 16S rRNA, where it helps stabilize the platform of the 30S subunit. In Acidiphilium cryptum (strain JF-5), this protein is Small ribosomal subunit protein bS18.